The primary structure comprises 216 residues: Pyridoxine/pyridoxamine 5'-phosphate oxidase (216 aa).

Residues 9–12 and Arg67 each bind substrate; that span reads RLSY. FMN is bound by residues 62–67, 77–78, Lys84, and Gln106; these read RIVLLR and YT. Residues Tyr124, Arg128, and Ser132 each coordinate substrate. Residues 142–143 and Trp188 each bind FMN; that span reads QS. 194–196 is a substrate binding site; that stretch reads RMH. Arg198 provides a ligand contact to FMN.

This sequence belongs to the pyridoxamine 5'-phosphate oxidase family. As to quaternary structure, homodimer. FMN is required as a cofactor.

The enzyme catalyses pyridoxamine 5'-phosphate + O2 + H2O = pyridoxal 5'-phosphate + H2O2 + NH4(+). It carries out the reaction pyridoxine 5'-phosphate + O2 = pyridoxal 5'-phosphate + H2O2. Its pathway is cofactor metabolism; pyridoxal 5'-phosphate salvage; pyridoxal 5'-phosphate from pyridoxamine 5'-phosphate: step 1/1. It functions in the pathway cofactor metabolism; pyridoxal 5'-phosphate salvage; pyridoxal 5'-phosphate from pyridoxine 5'-phosphate: step 1/1. Its function is as follows. Catalyzes the oxidation of either pyridoxine 5'-phosphate (PNP) or pyridoxamine 5'-phosphate (PMP) into pyridoxal 5'-phosphate (PLP). The chain is Pyridoxine/pyridoxamine 5'-phosphate oxidase from Psychrobacter arcticus (strain DSM 17307 / VKM B-2377 / 273-4).